A 151-amino-acid polypeptide reads, in one-letter code: Myosin light polypeptide 6 (151 aa).

Position 2 is an N-acetylcysteine (C2). 3 EF-hand domains span residues 7–42 (EQTAEFKEAFQLFDRTGDGKILYSQCGDVMRALGQN), 84–119 (GCFEDYVEGLRVFDKEGNGTVMGAEIRHVLVTLGEK), and 119–151 (KMTEEEVEQLVAGHEDSNGCINYEELVRMVLSG).

In terms of assembly, myosin is a hexamer of 2 heavy chains and 4 light chains.

Its function is as follows. Regulatory light chain of myosin. Does not bind calcium. This chain is Myosin light polypeptide 6 (MYL6), found in Gallus gallus (Chicken).